We begin with the raw amino-acid sequence, 357 residues long: Membrane-bound lytic murein transglycosylase C (357 aa).

Residues methionine 1–alanine 15 form the signal peptide. Cysteine 16 is lipidated: N-palmitoyl cysteine. Cysteine 16 carries the S-diacylglycerol cysteine lipid modification.

The protein belongs to the transglycosylase Slt family.

The protein resides in the cell outer membrane. The enzyme catalyses Exolytic cleavage of the (1-&gt;4)-beta-glycosidic linkage between N-acetylmuramic acid (MurNAc) and N-acetylglucosamine (GlcNAc) residues in peptidoglycan, from either the reducing or the non-reducing ends of the peptidoglycan chains, with concomitant formation of a 1,6-anhydrobond in the MurNAc residue.. Its function is as follows. Murein-degrading enzyme. May play a role in recycling of muropeptides during cell elongation and/or cell division. The polypeptide is Membrane-bound lytic murein transglycosylase C (Haemophilus influenzae (strain PittEE)).